A 262-amino-acid chain; its full sequence is uncharacterized protein (262 aa).

It belongs to the glycosyltransferase 2 family.

This is an uncharacterized protein from Mycobacterium tuberculosis (strain CDC 1551 / Oshkosh).